A 272-amino-acid chain; its full sequence is uncharacterized protein (272 aa).

One can recognise an AB hydrolase-1 domain in the interval 20–133 (PVLIFIPGAN…PPINTFLPDS (114 aa)).

The protein belongs to the AB hydrolase superfamily.

This is an uncharacterized protein from Staphylococcus aureus (strain MSSA476).